A 199-amino-acid polypeptide reads, in one-letter code: Molybdenum cofactor guanylyltransferase (199 aa).

GTP is bound by residues 12-14 (LAG), Lys-25, Asn-53, Asp-71, and Asp-101. Mg(2+) is bound at residue Asp-101.

The protein belongs to the MobA family. In terms of assembly, monomer. It depends on Mg(2+) as a cofactor.

The protein resides in the cytoplasm. The enzyme catalyses Mo-molybdopterin + GTP + H(+) = Mo-molybdopterin guanine dinucleotide + diphosphate. Functionally, transfers a GMP moiety from GTP to Mo-molybdopterin (Mo-MPT) cofactor (Moco or molybdenum cofactor) to form Mo-molybdopterin guanine dinucleotide (Mo-MGD) cofactor. This chain is Molybdenum cofactor guanylyltransferase, found in Cupriavidus necator (strain ATCC 17699 / DSM 428 / KCTC 22496 / NCIMB 10442 / H16 / Stanier 337) (Ralstonia eutropha).